Here is a 444-residue protein sequence, read N- to C-terminus: Methylenetetrahydrofolate--tRNA-(uracil-5-)-methyltransferase TrmFO (444 aa).

10-15 (GAGLAG) lines the FAD pocket.

This sequence belongs to the MnmG family. TrmFO subfamily. FAD serves as cofactor.

It is found in the cytoplasm. It catalyses the reaction uridine(54) in tRNA + (6R)-5,10-methylene-5,6,7,8-tetrahydrofolate + NADH + H(+) = 5-methyluridine(54) in tRNA + (6S)-5,6,7,8-tetrahydrofolate + NAD(+). The catalysed reaction is uridine(54) in tRNA + (6R)-5,10-methylene-5,6,7,8-tetrahydrofolate + NADPH + H(+) = 5-methyluridine(54) in tRNA + (6S)-5,6,7,8-tetrahydrofolate + NADP(+). In terms of biological role, catalyzes the folate-dependent formation of 5-methyl-uridine at position 54 (M-5-U54) in all tRNAs. This Streptococcus agalactiae serotype Ia (strain ATCC 27591 / A909 / CDC SS700) protein is Methylenetetrahydrofolate--tRNA-(uracil-5-)-methyltransferase TrmFO.